The primary structure comprises 1582 residues: MPLAFCGTENHSAAYRVDQGVLNNGCFVDALNVVPHVFLLFITFPILFIGWGSQSSKVHIHHSTWLHFPGHNLRWILTFILLFVLVCEIAEGILSDGVTESRHLHLYMPAGMAFMAAITSVVYYHNIETSNFPKLLIALLIYWTLAFITKTIKFVKFYDHAIGFSQLRFCLTGLLVILYGMLLLVEVNVIRVRRYIFFKTPREVKPPEDLQDLGVRFLQPFVNLLSKGTYWWMNAFIKTAHKKPIDLRAIAKLPIAMRALTNYQRLCVAFDAQARKDTQSPQGARAIWRALCHAFGRRLILSSTFRILADLLGFAGPLCIFGIVDHLGKENHVFQPKTQFLGVYFVSSQEFLGNAYVLAVLLFLALLLQRTFLQASYYVAIETGINLRGAIQTKIYNKIMHMSTSNLSMGEMTAGQICNLVAIDTNQLMWFFFLCPNLWTMPVQIIVGVILLYYILGVSALIGAAVIILLAPVQYFVATKLSQAQRTTLEHSNERLKQTNEMLRGMKLLKLYAWESIFCSRVEVTRRKEMTSLRAFAVYTSISIFMNTAIPIAAVLITFVGHVSFFKESDLSPSVAFASLSLFHILVTPLFLLSSVVRSTVKALVSVQKLSEFLSSAEIREEQCAPREPAPQGQAGKYQAVPLKVVNRKRPAREEVRDLLGPLQRLAPSMDGDADNFCVQIIGGFFTWTPDGIPTLSNITIRIPRGQLTMIVGQVGCGKSSLLLATLGEMQKVSGAVFWNSNLPDSEGEDPSSPERETAAGSDIRSRGPVAYASQKPWLLNATVEENITFESPFNKQRYKMVIEACSLQPDIDILPHGDQTQIGERGINLSGGQRQRISVARALYQQTNVVFLDDPFSALDVHLSDHLMQAGILELLRDDKRTVVLVTHKLQYLPHADWIIAMKDGTIQREGTLKDFQRSECQLFEHWKTLMNRQDQELEKETVMERKASEPSQGLPRAMSSRDGLLLDEEEEEEEAAESEEDDNLSSVLHQRAKIPWRACTKYLSSAGILLLSLLVFSQLLKHMVLVAIDYWLAKWTDSALVLSPAARNCSLSQECDLDQSVYAMVFTLLCSLGIVLCLVTSVTVEWTGLKVAKRLHRSLLNRIILAPMRFFETTPLGSILNRFSSDCNTIDQHIPSTLECLSRSTLLCVSALTVISYVTPVFLVALLPLAVVCYFIQKYFRVASRDLQQLDDTTQLPLVSHFAETVEGLTTIRAFRYEARFQQKLLEYTDSNNIASLFLTAANRWLEVCMEYIGACVVLIAAATSISNSLHRELSAGLVGLGLTYALMVSNYLNWMVRNLADMEIQLGAVKRIHALLKTEAESYEGLLAPSLIPKNWPDQGKIQIQNLSVRYDSSLKPVLKHVNTLISPGQKIGICGRTGSGKSSFSLAFFRMVDMFEGRIIIDGIDIAKLPLHTLRSRLSIILQDPVLFSGTIRFNLDPEKKCSDSTLWEALEIAQLKLVVKALPGGLDAIITEGGENFSQGQRQLFCLARAFVRKTSIFIMDEATASIDMATENILQKVVMTAFADRTVVTIAHRVHTILSADLVMVLKRGAILEFDKPETLLSQKDSVFASFVRADK.

The Extracellular portion of the chain corresponds to 1–30 (MPLAFCGTENHSAAYRVDQGVLNNGCFVDA). C6 and C26 are oxidised to a cystine. N-linked (GlcNAc...) asparagine glycosylation is present at N10. The chain crosses the membrane as a helical span at residues 31 to 47 (LNVVPHVFLLFITFPIL). Over 48–72 (FIGWGSQSSKVHIHHSTWLHFPGHN) the chain is Cytoplasmic. Residues 73–89 (LRWILTFILLFVLVCEI) traverse the membrane as a helical segment. At 90–106 (AEGILSDGVTESRHLHL) the chain is on the extracellular side. A helical transmembrane segment spans residues 107-123 (YMPAGMAFMAAITSVVY). The Cytoplasmic segment spans residues 124–136 (YHNIETSNFPKLL). The helical transmembrane segment at 137–153 (IALLIYWTLAFITKTIK) threads the bilayer. Residues 154-169 (FVKFYDHAIGFSQLRF) lie on the Extracellular side of the membrane. The helical transmembrane segment at 170 to 186 (CLTGLLVILYGMLLLVE) threads the bilayer. The Cytoplasmic portion of the chain corresponds to 187–303 (VNVIRVRRYI…AFGRRLILSS (117 aa)). The region spanning 299–602 (LILSSTFRIL…LSSVVRSTVK (304 aa)) is the ABC transmembrane type-1 1 domain. The chain crosses the membrane as a helical span at residues 304 to 319 (TFRILADLLGFAGPLC). Residues 320–356 (IFGIVDHLGKENHVFQPKTQFLGVYFVSSQEFLGNAY) are Extracellular-facing. A helical transmembrane segment spans residues 357 to 372 (VLAVLLFLALLLQRTF). Residues 373–438 (LQASYYVAIE…MWFFFLCPNL (66 aa)) are Cytoplasmic-facing. Residues 439–454 (WTMPVQIIVGVILLYY) form a helical membrane-spanning segment. The Extracellular portion of the chain corresponds to 455-460 (ILGVSA). The chain crosses the membrane as a helical span at residues 461–473 (LIGAAVIILLAPV). At 474–541 (QYFVATKLSQ…SLRAFAVYTS (68 aa)) the chain is on the cytoplasmic side. Residues 542-557 (ISIFMNTAIPIAAVLI) form a helical membrane-spanning segment. Over 558-576 (TFVGHVSFFKESDLSPSVA) the chain is Extracellular. Residues 577-592 (FASLSLFHILVTPLFL) form a helical membrane-spanning segment. Residues 593–1013 (LSSVVRSTVK…YLSSAGILLL (421 aa)) lie on the Cytoplasmic side of the membrane. The ABC transporter 1 domain maps to 679–930 (VQIIGGFFTW…ECQLFEHWKT (252 aa)). ATP-binding residues include W688, G716, S720, and S721. Residue S720 coordinates Mg(2+). The disordered stretch occupies residues 741–766 (SNLPDSEGEDPSSPERETAAGSDIRS). Q775 is a Mg(2+) binding site. A compositionally biased stretch (basic and acidic residues) spans 939-950 (LEKETVMERKAS). The segment at 939–962 (LEKETVMERKASEPSQGLPRAMSS) is disordered. The ABC transmembrane type-1 2 domain occupies 1013-1307 (LSLLVFSQLL…MVRNLADMEI (295 aa)). Residues 1014–1031 (SLLVFSQLLKHMVLVAID) traverse the membrane as a helical segment. Over 1032-1067 (YWLAKWTDSALVLSPAARNCSLSQECDLDQSVYAMV) the chain is Extracellular. N1050 carries an N-linked (GlcNAc...) asparagine glycan. Residues 1068–1084 (FTLLCSLGIVLCLVTSV) traverse the membrane as a helical segment. At 1085-1143 (TVEWTGLKVAKRLHRSLLNRIILAPMRFFETTPLGSILNRFSSDCNTIDQHIPSTLECL) the chain is on the cytoplasmic side. A helical membrane pass occupies residues 1144-1161 (SRSTLLCVSALTVISYVT). Position 1162 (P1162) is a topological domain, extracellular. Residues 1163 to 1175 (VFLVALLPLAVVC) traverse the membrane as a helical segment. Over 1176-1249 (YFIQKYFRVA…FLTAANRWLE (74 aa)) the chain is Cytoplasmic. The helical transmembrane segment at 1250-1265 (VCMEYIGACVVLIAAA) threads the bilayer. Topologically, residues 1266-1281 (TSISNSLHRELSAGLV) are extracellular. A helical transmembrane segment spans residues 1282-1297 (GLGLTYALMVSNYLNW). At 1298–1582 (MVRNLADMEI…VFASFVRADK (285 aa)) the chain is on the cytoplasmic side. The region spanning 1345–1579 (IQIQNLSVRY…KDSVFASFVR (235 aa)) is the ABC transporter 2 domain. T1381, G1382, G1384, K1385, S1386, and S1387 together coordinate ADP. S1483 serves as a coordination point for ATP.

It belongs to the ABC transporter superfamily. ABCC family. Conjugate transporter (TC 3.A.1.208) subfamily. As to quaternary structure, forms an heterooctamer with KCNJ11; four ABCC8/SUR1 molecules interact with one KCNJ11 homotetramer.

It is found in the cell membrane. KATP channels are regulated by cytoplasmic ATP/ADP ratios; ATP inhibits the channel by closing the pore, while ADP activates the channel. Activated by phosphatidylinositol 4,5-biphosphate (PtdIns(4,5)P2). In terms of biological role, regulator subunit of pancreatic ATP-sensitive potassium channel (KATP), playing a major role in the regulation of insulin release. In pancreatic cells, it forms KATP channels with KCNJ11; KCNJ11 forms the channel pore while ABCC8 is required for activation and regulation. The polypeptide is ATP-binding cassette sub-family C member 8 (ABCC8) (Cricetus cricetus (Black-bellied hamster)).